We begin with the raw amino-acid sequence, 409 residues long: tRNA(Met) cytidine acetate ligase (409 aa).

Residues Val-7–His-20, Gly-102, Asn-169, and Arg-194 each bind ATP.

The protein belongs to the TmcAL family.

The protein resides in the cytoplasm. The catalysed reaction is cytidine(34) in elongator tRNA(Met) + acetate + ATP = N(4)-acetylcytidine(34) in elongator tRNA(Met) + AMP + diphosphate. Its function is as follows. Catalyzes the formation of N(4)-acetylcytidine (ac(4)C) at the wobble position of elongator tRNA(Met), using acetate and ATP as substrates. First activates an acetate ion to form acetyladenylate (Ac-AMP) and then transfers the acetyl group to tRNA to form ac(4)C34. The protein is tRNA(Met) cytidine acetate ligase of Clostridium botulinum (strain Okra / Type B1).